We begin with the raw amino-acid sequence, 279 residues long: DegV domain-containing protein SpyM3_1149 (279 aa).

Residues 4–278 (IKIVTDSSIT…EGAFAVMVRY (275 aa)) form the DegV domain. Hexadecanoate contacts are provided by threonine 62 and serine 95.

Functionally, may bind long-chain fatty acids, such as palmitate, and may play a role in lipid transport or fatty acid metabolism. The polypeptide is DegV domain-containing protein SpyM3_1149 (Streptococcus pyogenes serotype M3 (strain ATCC BAA-595 / MGAS315)).